We begin with the raw amino-acid sequence, 415 residues long: Histidine--tRNA ligase (415 aa).

It belongs to the class-II aminoacyl-tRNA synthetase family. Homodimer.

It localises to the cytoplasm. It carries out the reaction tRNA(His) + L-histidine + ATP = L-histidyl-tRNA(His) + AMP + diphosphate + H(+). The sequence is that of Histidine--tRNA ligase from Clostridium perfringens (strain ATCC 13124 / DSM 756 / JCM 1290 / NCIMB 6125 / NCTC 8237 / Type A).